A 100-amino-acid chain; its full sequence is uncharacterized protein (100 aa).

Residues V28–I45 traverse the membrane as a helical segment.

Its subcellular location is the membrane. This is an uncharacterized protein from Saccharomyces cerevisiae (strain ATCC 204508 / S288c) (Baker's yeast).